The sequence spans 260 residues: Vesicle-associated membrane protein/synaptobrevin-binding protein (260 aa).

The Cytoplasmic portion of the chain corresponds to 1-238; the sequence is MASHEQALIL…SPAPAAAVRA (238 aa). The MSP domain occupies 7 to 125; that stretch reads ALILEPAGEL…MDTKLRCVFE (119 aa). The interval 127 to 177 is disordered; sequence PDGSHQAPASDASRATDAGAHFSESALEDPTVASRKTETQSPKRVGAVGSA. Positions 172-216 form a coiled coil; the sequence is GAVGSAGEDVKKLQHELKKAQSEITSLKGENSQLKDEGIRLRKVA. A helical; Anchor for type IV membrane protein transmembrane segment spans residues 239 to 259; the sequence is FPPVVYVVAAIILGLIIGKFL.

Belongs to the VAMP-associated protein (VAP) (TC 9.B.17) family. Detected only in the central nervous system and the gill of aplysia.

It localises to the membrane. It is found in the synapse. The protein resides in the synaptosome. Required for neurotransmitter release. Interacts with VAMP. In Aplysia californica (California sea hare), this protein is Vesicle-associated membrane protein/synaptobrevin-binding protein.